A 1608-amino-acid chain; its full sequence is Adenylate cyclase type 10 (1608 aa).

Guanylate cyclase domains follow at residues 42 to 179 (VLMF…RLAQ) and 293 to 418 (TIVF…ARMM). Residues Asp47 and Ile48 each contribute to the Mg(2+) site. An ATP-binding site is contributed by 47-52 (DISGFT). Residue Lys95 participates in hydrogencarbonate binding. Asp99 provides a ligand contact to Mg(2+). ATP contacts are provided by Asp99 and Lys144. The hydrogencarbonate site is built by Val167, Arg176, and Met337. Residues Val406 and 412-416 (NIAAR) each bind ATP.

It belongs to the adenylyl cyclase class-4/guanylyl cyclase family. Mg(2+) serves as cofactor. The cofactor is Mn(2+). Cleavage may occur to generate the active 48 kDa form. Detected in testis (at protein level). Preferentially expressed in testis.

The protein resides in the cell membrane. Its subcellular location is the cytoplasm. The protein localises to the cytoskeleton. It is found in the perinuclear region. It localises to the nucleus. The protein resides in the cell projection. Its subcellular location is the cilium. The protein localises to the mitochondrion. The catalysed reaction is ATP = 3',5'-cyclic AMP + diphosphate. Activated by manganese or magnesium ions. In the presence of magnesium ions, the enzyme is activated by bicarbonate. Calcium mildly increases the enzyme activity, also in the presence of magnesium ions. Functionally, catalyzes the formation of the signaling molecule cAMP. May function as sensor that mediates responses to changes in cellular bicarbonate and CO(2) levels. Has a critical role in mammalian spermatogenesis by producing the cAMP which regulates cAMP-responsive nuclear factors indispensable for sperm maturation in the epididymis. Induces capacitation, the maturational process that sperm undergo prior to fertilization. Involved in ciliary beat regulation. This is Adenylate cyclase type 10 (Adcy10) from Rattus norvegicus (Rat).